The chain runs to 233 residues: Putative 26S proteasome non-ATPase regulatory subunit 8 homolog B (233 aa).

At M1 the chain carries N-acetylmethionine. Positions 38–217 constitute a PCI domain; it reads DHYLISLSLN…APCKEIPSLQ (180 aa).

It belongs to the proteasome subunit S14 family. In terms of assembly, component of the 19S regulatory particle (RP/PA700) lid subcomplex of the 26S proteasome. The 26S proteasome is composed of a core protease (CP), known as the 20S proteasome, capped at one or both ends by the 19S regulatory particle (RP/PA700). The RP/PA700 complex is composed of at least 17 different subunits in two subcomplexes, the base and the lid, which form the portions proximal and distal to the 20S proteolytic core, respectively. Interacts with UCH1 and UCH2.

Acts as a regulatory subunit of the 26S proteasome which is involved in the ATP-dependent degradation of ubiquitinated proteins. This Arabidopsis thaliana (Mouse-ear cress) protein is Putative 26S proteasome non-ATPase regulatory subunit 8 homolog B.